Consider the following 387-residue polypeptide: Polyadenylate-binding protein RBP45A (387 aa).

RRM domains lie at 60 to 140 (KSLW…WAQA), 154 to 233 (HTIF…PAAN), and 260 to 332 (TTIF…WGRS). Residues 329–342 (WGRSPNKQSDQAQW) are compositionally biased toward polar residues. The segment at 329–387 (WGRSPNKQSDQAQWNGGGYYGYPPQPQGGYGYAAQPPTQDPNAYYGGYTGYGNYQQQRQ) is disordered.

The protein belongs to the polyadenylate-binding RBP45 family. In terms of assembly, interacts with the poly(A) tail of mRNA in nucleus. Mostly expressed in seedlings, and, to a lower extent, in leaves, stems, and flowers. Present in immature anther tissues (tapetum cells) and mature pollen grains.

Its subcellular location is the nucleus. Functionally, heterogeneous nuclear ribonucleoprotein (hnRNP)-protein binding the poly(A) tail of mRNA and probably involved in some steps of pre-mRNA maturation. This chain is Polyadenylate-binding protein RBP45A (RBP45A), found in Arabidopsis thaliana (Mouse-ear cress).